Consider the following 120-residue polypeptide: Large ribosomal subunit protein bL17 (120 aa).

Belongs to the bacterial ribosomal protein bL17 family. In terms of assembly, part of the 50S ribosomal subunit. Contacts protein L32.

The protein is Large ribosomal subunit protein bL17 of Shouchella clausii (strain KSM-K16) (Alkalihalobacillus clausii).